The sequence spans 339 residues: Ketol-acid reductoisomerase (NADP(+)) (339 aa).

Positions M1–T182 constitute a KARI N-terminal Rossmann domain. NADP(+)-binding positions include Y24–Q27, S51, S53, and D83–Q86. H108 is a catalytic residue. G134 contributes to the NADP(+) binding site. A KARI C-terminal knotted domain is found at S183–A328. Residues D191, E195, E227, and E231 each contribute to the Mg(2+) site. Substrate is bound at residue S252.

It belongs to the ketol-acid reductoisomerase family. The cofactor is Mg(2+).

It carries out the reaction (2R)-2,3-dihydroxy-3-methylbutanoate + NADP(+) = (2S)-2-acetolactate + NADPH + H(+). The enzyme catalyses (2R,3R)-2,3-dihydroxy-3-methylpentanoate + NADP(+) = (S)-2-ethyl-2-hydroxy-3-oxobutanoate + NADPH + H(+). It functions in the pathway amino-acid biosynthesis; L-isoleucine biosynthesis; L-isoleucine from 2-oxobutanoate: step 2/4. Its pathway is amino-acid biosynthesis; L-valine biosynthesis; L-valine from pyruvate: step 2/4. Its function is as follows. Involved in the biosynthesis of branched-chain amino acids (BCAA). Catalyzes an alkyl-migration followed by a ketol-acid reduction of (S)-2-acetolactate (S2AL) to yield (R)-2,3-dihydroxy-isovalerate. In the isomerase reaction, S2AL is rearranged via a Mg-dependent methyl migration to produce 3-hydroxy-3-methyl-2-ketobutyrate (HMKB). In the reductase reaction, this 2-ketoacid undergoes a metal-dependent reduction by NADPH to yield (R)-2,3-dihydroxy-isovalerate. This is Ketol-acid reductoisomerase (NADP(+)) from Hyphomonas neptunium (strain ATCC 15444).